The chain runs to 149 residues: MHCPFCAAVDTKVIDSRLVGDGSQVRRRRQCLECHERFTTFEMAELVMPRVIKSDDIREPFDEEKLRRGMQKALEKRPVSSDDVEMAISYIKSQLRATGEREVPSKMIGNLVMDELKKLDKVAYIRFASVYRSFEDIREFGEEIARLQG.

A zinc finger spans residues 3 to 34 (CPFCAAVDTKVIDSRLVGDGSQVRRRRQCLEC). Positions 49-139 (PRVIKSDDIR…VYRSFEDIRE (91 aa)) constitute an ATP-cone domain.

This sequence belongs to the NrdR family. Zn(2+) is required as a cofactor.

Functionally, negatively regulates transcription of bacterial ribonucleotide reductase nrd genes and operons by binding to NrdR-boxes. This is Transcriptional repressor NrdR from Photorhabdus laumondii subsp. laumondii (strain DSM 15139 / CIP 105565 / TT01) (Photorhabdus luminescens subsp. laumondii).